A 316-amino-acid polypeptide reads, in one-letter code: Methionyl-tRNA formyltransferase (316 aa).

110 to 113 (SLLP) lines the (6S)-5,6,7,8-tetrahydrofolate pocket.

Belongs to the Fmt family.

The enzyme catalyses L-methionyl-tRNA(fMet) + (6R)-10-formyltetrahydrofolate = N-formyl-L-methionyl-tRNA(fMet) + (6S)-5,6,7,8-tetrahydrofolate + H(+). In terms of biological role, attaches a formyl group to the free amino group of methionyl-tRNA(fMet). The formyl group appears to play a dual role in the initiator identity of N-formylmethionyl-tRNA by promoting its recognition by IF2 and preventing the misappropriation of this tRNA by the elongation apparatus. The protein is Methionyl-tRNA formyltransferase of Bacillus licheniformis (strain ATCC 14580 / DSM 13 / JCM 2505 / CCUG 7422 / NBRC 12200 / NCIMB 9375 / NCTC 10341 / NRRL NRS-1264 / Gibson 46).